The sequence spans 110 residues: Proline-rich protein 15-like protein A (110 aa).

Disordered regions lie at residues 29 to 51 (IAGDHSSNGGEAPGTTDAATDSQ) and 65 to 110 (TKGR…KSGK). A compositionally biased stretch (basic residues) spans 65 to 85 (TKGRHVKVSHSGRFKEKKRIR). Positions 100–110 (TTANENNKSGK) are enriched in polar residues.

This sequence belongs to the PRR15 family.

This chain is Proline-rich protein 15-like protein A (prr15la), found in Danio rerio (Zebrafish).